A 340-amino-acid chain; its full sequence is DNA-directed RNA polymerase subunit alpha (340 aa).

Residues 1–233 (MIRDEISVST…DLFIPFLRAE (233 aa)) are alpha N-terminal domain (alpha-NTD). The alpha C-terminal domain (alpha-CTD) stretch occupies residues 268-340 (AFKHIFIDQS…DLPKNKFQIH (73 aa)).

It belongs to the RNA polymerase alpha chain family. In plastids the minimal PEP RNA polymerase catalytic core is composed of four subunits: alpha, beta, beta', and beta''. When a (nuclear-encoded) sigma factor is associated with the core the holoenzyme is formed, which can initiate transcription.

It is found in the plastid. The protein resides in the chloroplast. The catalysed reaction is RNA(n) + a ribonucleoside 5'-triphosphate = RNA(n+1) + diphosphate. In terms of biological role, DNA-dependent RNA polymerase catalyzes the transcription of DNA into RNA using the four ribonucleoside triphosphates as substrates. In Cycas taitungensis (Prince sago), this protein is DNA-directed RNA polymerase subunit alpha.